A 314-amino-acid polypeptide reads, in one-letter code: Methenyltetrahydromethanopterin cyclohydrolase (314 aa).

It belongs to the MCH family.

The protein localises to the cytoplasm. It catalyses the reaction 5,10-methenyl-5,6,7,8-tetrahydromethanopterin + H2O = N(5)-formyl-5,6,7,8-tetrahydromethanopterin + H(+). It participates in one-carbon metabolism; methanogenesis from CO(2); 5,10-methenyl-5,6,7,8-tetrahydromethanopterin from CO(2): step 3/3. In terms of biological role, catalyzes the reversible interconversion of 5-formyl-H(4)MPT to methenyl-H(4)MPT(+). This chain is Methenyltetrahydromethanopterin cyclohydrolase, found in Methanoregula boonei (strain DSM 21154 / JCM 14090 / 6A8).